A 460-amino-acid chain; its full sequence is Elongation factor 1-alpha-B (460 aa).

Position 2 is a n,N,N-trimethylglycine (G2). K3 bears the N6,N6-dimethyllysine; alternate mark. Residue K3 is modified to N6-methyllysine; alternate. The tr-type G domain maps to 5–240 (KGHINVVVIG…DSIEPPARPT (236 aa)). Residues 14 to 21 (GHVDSGKS) form a G1 region. Residue 14–21 (GHVDSGKS) coordinates GTP. N6-methyllysine is present on K30. Residues 70-74 (GITID) form a G2 region. N6,N6,N6-trimethyllysine is present on K79. Positions 91 to 94 (DAPG) are G3. Residues 91-95 (DAPGH) and 153-156 (NKMD) contribute to the GTP site. The segment at 153-156 (NKMD) is G4. The tract at residues 192-194 (SGF) is G5. Position 316 is an N6,N6-dimethyllysine; alternate (K316). The residue at position 316 (K316) is an N6-methyllysine; alternate. K390 carries the post-translational modification N6-methyllysine.

It belongs to the TRAFAC class translation factor GTPase superfamily. Classic translation factor GTPase family. EF-Tu/EF-1A subfamily.

The protein localises to the cytoplasm. This protein promotes the GTP-dependent binding of aminoacyl-tRNA to the A-site of ribosomes during protein biosynthesis. This Schizosaccharomyces pombe (strain 972 / ATCC 24843) (Fission yeast) protein is Elongation factor 1-alpha-B (tef102).